The sequence spans 234 residues: tRNA1(Val) (adenine(37)-N6)-methyltransferase (234 aa).

It belongs to the methyltransferase superfamily. tRNA (adenine-N(6)-)-methyltransferase family.

The protein resides in the cytoplasm. It catalyses the reaction adenosine(37) in tRNA1(Val) + S-adenosyl-L-methionine = N(6)-methyladenosine(37) in tRNA1(Val) + S-adenosyl-L-homocysteine + H(+). Its function is as follows. Specifically methylates the adenine in position 37 of tRNA(1)(Val) (anticodon cmo5UAC). This Aliivibrio fischeri (strain ATCC 700601 / ES114) (Vibrio fischeri) protein is tRNA1(Val) (adenine(37)-N6)-methyltransferase.